Consider the following 472-residue polypeptide: MVFFRSVSLLNKLRSRAVQQSNLSNTVRWFQVQTSASDLDLRSQLKELIPEQQERIKKLKAEHGKVQLGNITVDMVLGGMRGMTGLLWETSLLDPEEGIRFRGLSIPECQKLLPGAKPGGEPLPEGLLWLLLTGKVPTKEQVDALSAELRSRAAVPEHVYKTIDALPVTAHPMTQFATGVMALQVQSEFQKAYEKGIHKTKYWEPTYEDSITLIAQLPVVAAYIYRRMYKNGQSISTDDSLDYGANFAHMLGYDSPSMQELMRLYVTIHTDHEGGNVSAHTGHLVASALSDPYLSFAAALNGLAGPLHGLANQEVLLWIKSVVSECGENVTKEQLKDYIWKTLNSGKVVPGYGHGVLRNTDPRYICQREFALKHLPDDPLFQLVSNLFEVVPPILTELGKVKNPWPNVDAHSGVLLNHYGLTEARYYTVLFGVSRAIGICSQLVWDRALGLPLERPKSVTMEWLENHCKKSS.

Residues His-308, His-354, and Asp-409 contribute to the active site.

It belongs to the citrate synthase family. Homodimer.

The protein resides in the mitochondrion matrix. The enzyme catalyses oxaloacetate + acetyl-CoA + H2O = citrate + CoA + H(+). Its pathway is carbohydrate metabolism; tricarboxylic acid cycle; isocitrate from oxaloacetate: step 1/2. This is Citrate synthase, mitochondrial (CS) from Daucus carota (Wild carrot).